A 440-amino-acid chain; its full sequence is tRNA modification GTPase MnmE (440 aa).

Residues arginine 34, glutamate 94, and arginine 134 each contribute to the (6S)-5-formyl-5,6,7,8-tetrahydrofolate site. The region spanning 229–367 (GVRVVLAGPP…LVALLLDRAA (139 aa)) is the TrmE-type G domain. K(+) is bound at residue asparagine 239. GTP contacts are provided by residues 239–244 (NAGKST), 258–264 (TPIAGTT), 283–286 (DTAG), and 348–350 (SAR). Position 243 (serine 243) interacts with Mg(2+). Residues threonine 258, isoleucine 260, and threonine 263 each contribute to the K(+) site. Threonine 264 lines the Mg(2+) pocket. Lysine 440 provides a ligand contact to (6S)-5-formyl-5,6,7,8-tetrahydrofolate.

It belongs to the TRAFAC class TrmE-Era-EngA-EngB-Septin-like GTPase superfamily. TrmE GTPase family. Homodimer. Heterotetramer of two MnmE and two MnmG subunits. Requires K(+) as cofactor.

Its subcellular location is the cytoplasm. Functionally, exhibits a very high intrinsic GTPase hydrolysis rate. Involved in the addition of a carboxymethylaminomethyl (cmnm) group at the wobble position (U34) of certain tRNAs, forming tRNA-cmnm(5)s(2)U34. The polypeptide is tRNA modification GTPase MnmE (Rhizorhabdus wittichii (strain DSM 6014 / CCUG 31198 / JCM 15750 / NBRC 105917 / EY 4224 / RW1) (Sphingomonas wittichii)).